Reading from the N-terminus, the 254-residue chain is Small ribosomal subunit protein uS2 (254 aa).

It belongs to the universal ribosomal protein uS2 family.

The protein is Small ribosomal subunit protein uS2 of Brucella ovis (strain ATCC 25840 / 63/290 / NCTC 10512).